Consider the following 445-residue polypeptide: Phosphoglucosamine mutase (445 aa).

S102 acts as the Phosphoserine intermediate in catalysis. Residues S102, D241, D243, and D245 each coordinate Mg(2+). Residue S102 is modified to Phosphoserine.

The protein belongs to the phosphohexose mutase family. Requires Mg(2+) as cofactor. Post-translationally, activated by phosphorylation.

The catalysed reaction is alpha-D-glucosamine 1-phosphate = D-glucosamine 6-phosphate. Functionally, catalyzes the conversion of glucosamine-6-phosphate to glucosamine-1-phosphate. The polypeptide is Phosphoglucosamine mutase (Shewanella sp. (strain W3-18-1)).